A 208-amino-acid chain; its full sequence is Probable GTP-binding protein EngB (208 aa).

The EngB-type G domain maps to 23-205 (LTSEMVVLGR…RQTLLKYLLT (183 aa)). GTP is bound by residues 31 to 38 (GRSNVGKS), 57 to 61 (GKTRL), 84 to 87 (DLPG), 154 to 157 (TKFD), and 182 to 184 (FNA). The Mg(2+) site is built by serine 38 and threonine 59.

It belongs to the TRAFAC class TrmE-Era-EngA-EngB-Septin-like GTPase superfamily. EngB GTPase family. It depends on Mg(2+) as a cofactor.

Functionally, necessary for normal cell division and for the maintenance of normal septation. This Helicobacter acinonychis (strain Sheeba) protein is Probable GTP-binding protein EngB.